We begin with the raw amino-acid sequence, 388 residues long: MRYLTAGESHGLSLTAIIEGIPAGLTLHPADIDHELQRRQGGYGRGTRMSIETDRVQISSGVRHGKTTGAPITLTVINKDHQKWLDVMAVGDIEETLKLKRRVKHPRPGHADLVGGIKYHFNDLRDALERSSARETTMRVAVGAVAKRILAELGIDMLHHILIFGGITITIPSKLSFRELQERALHSELSIVNPKQEEEIKTYIDKIKKEGDTIGGIIETIVQGVPAGLGSYVQWDKKLDAKLAQAVLSINAFKGVEFGVGFDMGFQKGSQVMDEITWTPTQGYGRQTNHLGGFEGGMTTGQPLVVKGVMKPIPTLYKPLMSVDIDSHEPYKATVERSDPTALPAAGVIMENVVATVLAKEILETFSSTTMSELQKAFSDYRAYVKQF.

Residues Arg39 and Arg45 each contribute to the NADP(+) site. Residues 130 to 132, 251 to 252, Gly296, 311 to 315, and Arg337 each bind FMN; these read RSS, NA, and KPIPT.

The protein belongs to the chorismate synthase family. In terms of assembly, homotetramer. FMNH2 serves as cofactor.

The catalysed reaction is 5-O-(1-carboxyvinyl)-3-phosphoshikimate = chorismate + phosphate. The protein operates within metabolic intermediate biosynthesis; chorismate biosynthesis; chorismate from D-erythrose 4-phosphate and phosphoenolpyruvate: step 7/7. Functionally, catalyzes the anti-1,4-elimination of the C-3 phosphate and the C-6 proR hydrogen from 5-enolpyruvylshikimate-3-phosphate (EPSP) to yield chorismate, which is the branch point compound that serves as the starting substrate for the three terminal pathways of aromatic amino acid biosynthesis. This reaction introduces a second double bond into the aromatic ring system. The protein is Chorismate synthase of Streptococcus pyogenes serotype M5 (strain Manfredo).